Reading from the N-terminus, the 168-residue chain is Ribosome rescue factor SmrB (168 aa).

Positions 92–167 (LDLHGLTKEQ…GDAAILILFE (76 aa)) constitute a Smr domain.

Belongs to the SmrB family. In terms of assembly, associates with collided ribosomes, but not with correctly translating polysomes.

Functionally, acts as a ribosome collision sensor. Detects stalled/collided disomes (pairs of ribosomes where the leading ribosome is stalled and a second ribosome has collided with it) and endonucleolytically cleaves mRNA at the 5' boundary of the stalled ribosome. Stalled/collided disomes form a new interface (primarily via the 30S subunits) that binds SmrB. Cleaved mRNA becomes available for tmRNA ligation, leading to ribosomal subunit dissociation and rescue of stalled ribosomes. In Pasteurella multocida (strain Pm70), this protein is Ribosome rescue factor SmrB.